The sequence spans 249 residues: 1-(5-phosphoribosyl)-5-[(5-phosphoribosylamino)methylideneamino] imidazole-4-carboxamide isomerase (249 aa).

Aspartate 8 serves as the catalytic Proton acceptor. Aspartate 129 functions as the Proton donor in the catalytic mechanism.

The protein belongs to the HisA/HisF family.

The protein localises to the cytoplasm. The catalysed reaction is 1-(5-phospho-beta-D-ribosyl)-5-[(5-phospho-beta-D-ribosylamino)methylideneamino]imidazole-4-carboxamide = 5-[(5-phospho-1-deoxy-D-ribulos-1-ylimino)methylamino]-1-(5-phospho-beta-D-ribosyl)imidazole-4-carboxamide. It functions in the pathway amino-acid biosynthesis; L-histidine biosynthesis; L-histidine from 5-phospho-alpha-D-ribose 1-diphosphate: step 4/9. The protein is 1-(5-phosphoribosyl)-5-[(5-phosphoribosylamino)methylideneamino] imidazole-4-carboxamide isomerase of Rhizobium rhizogenes (strain K84 / ATCC BAA-868) (Agrobacterium radiobacter).